The chain runs to 127 residues: uncharacterized protein (127 aa).

This is an uncharacterized protein from Acidianus two-tailed virus (ATV).